A 157-amino-acid chain; its full sequence is MRVVIQRVKASRVEVDGEVIGTIGRGLNLLVGISRTDTIAEVEWMVRKCLDLRLFPDEKGSLALSVQEMGAELLVVSQFTLYGDGRKGRRPSFDRAAGGEQAQTLYDRFVAGLRQSGLRVETGQFGAMMEVFILNDGPVTLLLEREAPLEQEDNRDD.

Positions 137–138 (GP) match the Gly-cisPro motif, important for rejection of L-amino acids motif.

This sequence belongs to the DTD family. As to quaternary structure, homodimer.

The protein localises to the cytoplasm. It carries out the reaction glycyl-tRNA(Ala) + H2O = tRNA(Ala) + glycine + H(+). It catalyses the reaction a D-aminoacyl-tRNA + H2O = a tRNA + a D-alpha-amino acid + H(+). An aminoacyl-tRNA editing enzyme that deacylates mischarged D-aminoacyl-tRNAs. Also deacylates mischarged glycyl-tRNA(Ala), protecting cells against glycine mischarging by AlaRS. Acts via tRNA-based rather than protein-based catalysis; rejects L-amino acids rather than detecting D-amino acids in the active site. By recycling D-aminoacyl-tRNA to D-amino acids and free tRNA molecules, this enzyme counteracts the toxicity associated with the formation of D-aminoacyl-tRNA entities in vivo and helps enforce protein L-homochirality. The polypeptide is D-aminoacyl-tRNA deacylase (Cyanothece sp. (strain PCC 7425 / ATCC 29141)).